Here is a 569-residue protein sequence, read N- to C-terminus: Protein misato homolog 1 (569 aa).

A phosphoserine mark is found at S41 and S495.

Belongs to the misato family.

It localises to the mitochondrion outer membrane. The protein resides in the cytoplasm. Its function is as follows. Involved in the regulation of mitochondrial distribution and morphology. Required for mitochondrial fusion and mitochondrial network formation. The protein is Protein misato homolog 1 (MSTO1) of Macaca fascicularis (Crab-eating macaque).